The chain runs to 158 residues: Cytochrome c-type biogenesis protein CcmE (158 aa).

The Cytoplasmic segment spans residues 1 to 8; it reads MMRHRNRR. The chain crosses the membrane as a helical; Signal-anchor for type II membrane protein span at residues 9–29; sequence LATIAASAIVLVVAVGLGLMA. The Periplasmic segment spans residues 30–158; that stretch reads LRSAVVFFYS…PSAAGDGDSR (129 aa). 2 residues coordinate heme: H123 and Y127. A disordered region spans residues 139–158; it reads AGVWQGEGETPSAAGDGDSR.

It belongs to the CcmE/CycJ family.

Its subcellular location is the cell inner membrane. Functionally, heme chaperone required for the biogenesis of c-type cytochromes. Transiently binds heme delivered by CcmC and transfers the heme to apo-cytochromes in a process facilitated by CcmF and CcmH. This chain is Cytochrome c-type biogenesis protein CcmE, found in Maricaulis maris (strain MCS10) (Caulobacter maris).